Here is a 732-residue protein sequence, read N- to C-terminus: Putative pectinesterase/pectinesterase inhibitor 28 (732 aa).

A helical transmembrane segment spans residues 17–37; that stretch reads VIISISSVLLISMVVAVTIGV. 4 N-linked (GlcNAc...) asparagine glycosylation sites follow: asparagine 40, asparagine 93, asparagine 278, and asparagine 297. The segment at 51–204 is pectinesterase inhibitor 28; it reads TTSVKAIKDV…VQLTHNGLAM (154 aa). The segment at 252 to 548 is pectinesterase 28; the sequence is DIVVAQDGSG…FTPAQYIQGD (297 aa). Positions 327 and 357 each coordinate substrate. Aspartate 380 serves as the catalytic Proton donor; for pectinesterase activity. Cysteine 394 and cysteine 414 are joined by a disulfide. Aspartate 401 functions as the Nucleophile; for pectinesterase activity in the catalytic mechanism. N-linked (GlcNAc...) asparagine glycosylation is present at asparagine 413. Substrate is bound by residues arginine 469 and tryptophan 471. N-linked (GlcNAc...) asparagine glycans are attached at residues asparagine 566, asparagine 570, and asparagine 581. Low complexity-rich tracts occupy residues 570–620 and 633–732; these read NSTV…PSTS and PSMV…SSIG. The segment at 570-732 is disordered; the sequence is NSTVTGSSLS…PSASPQSSIG (163 aa).

This sequence in the N-terminal section; belongs to the PMEI family. In the C-terminal section; belongs to the pectinesterase family. As to expression, expressed in flower buds.

It localises to the membrane. It catalyses the reaction [(1-&gt;4)-alpha-D-galacturonosyl methyl ester](n) + n H2O = [(1-&gt;4)-alpha-D-galacturonosyl](n) + n methanol + n H(+). The protein operates within glycan metabolism; pectin degradation; 2-dehydro-3-deoxy-D-gluconate from pectin: step 1/5. Functionally, acts in the modification of cell walls via demethylesterification of cell wall pectin. This is Putative pectinesterase/pectinesterase inhibitor 28 (PME28) from Arabidopsis thaliana (Mouse-ear cress).